Reading from the N-terminus, the 104-residue chain is MGDVMIQSVKTESGLVDGHHGSCDSLGCVVGALAKVAKLVVALAALVLNGALCVLSLVALCVGATPVGPLAVLVATTLASFLCVAYVLFIAAKDRGWIASTNKC.

Helical transmembrane passes span 39 to 59 (LVVA…SLVA) and 70 to 90 (LAVL…VLFI).

It is found in the secreted. Its subcellular location is the host vacuole. The protein resides in the host pathogen-containing vacuole. The protein localises to the host pathogen-containing vacuole membrane. Its function is as follows. Inclusion membrane protein probably involved in early modification events of the chlamydial inclusion. This is Inclusion membrane protein F from Chlamydia trachomatis serovar L2 (strain ATCC VR-902B / DSM 19102 / 434/Bu).